The chain runs to 170 residues: uncharacterized protein (170 aa).

In terms of domain architecture, VOC spans 25 to 151; the sequence is PALSPHLVVD…FGHHWSLGQP (127 aa).

This is an uncharacterized protein from Mycobacterium tuberculosis (strain CDC 1551 / Oshkosh).